The primary structure comprises 254 residues: Probable phosphomannomutase (254 aa).

Catalysis depends on aspartate 14, which acts as the Nucleophile. Mg(2+) contacts are provided by aspartate 14 and aspartate 16. Residue aspartate 16 is the Proton donor/acceptor of the active site. 6 residues coordinate alpha-D-mannose 1-phosphate: arginine 23, arginine 129, arginine 140, arginine 147, serine 185, and aspartate 187. Aspartate 214, phenylalanine 226, aspartate 228, and threonine 231 together coordinate Mg(2+).

This sequence belongs to the eukaryotic PMM family. As to quaternary structure, homodimer.

The protein localises to the cytoplasm. It catalyses the reaction alpha-D-mannose 1-phosphate = D-mannose 6-phosphate. Its pathway is nucleotide-sugar biosynthesis; GDP-alpha-D-mannose biosynthesis; alpha-D-mannose 1-phosphate from D-fructose 6-phosphate: step 2/2. Its function is as follows. Involved in the synthesis of the GDP-mannose and dolichol-phosphate-mannose required for a number of critical mannosyl transfer reactions. The sequence is that of Probable phosphomannomutase from Caenorhabditis elegans.